The following is a 706-amino-acid chain: Phenylalanine--tRNA ligase beta subunit, chloroplastic (706 aa).

The B5 domain maps to 300 to 388 (KVLKPIVLNY…RLHGFNNFLT (89 aa)). Asp366, Asp372, Glu375, and Glu376 together coordinate Mg(2+). Residues 612–705 (SVYPKIVKDL…LELKVQAILR (94 aa)) enclose the FDX-ACB domain.

This sequence belongs to the phenylalanyl-tRNA synthetase beta subunit family. Type 1 subfamily. Tetramer of two alpha and two beta subunits. It depends on Mg(2+) as a cofactor.

It localises to the plastid. Its subcellular location is the chloroplast. The enzyme catalyses tRNA(Phe) + L-phenylalanine + ATP = L-phenylalanyl-tRNA(Phe) + AMP + diphosphate + H(+). This chain is Phenylalanine--tRNA ligase beta subunit, chloroplastic, found in Phaeodactylum tricornutum (strain CCAP 1055/1).